Here is a 218-residue protein sequence, read N- to C-terminus: DNA ADP-ribosyl transferase (218 aa).

One can recognise a DarT domain in the interval 14 to 217 (ALIWRIVHRD…SVHTRSGWYF (204 aa)). NAD(+) is bound by residues 18 to 20 (RIV) and arginine 57. The tract at residues 41-59 (QAENWINIGNPELIGKRAG) is NAD(+)-binding element. Arginine 57 serves as the catalytic Proton acceptor. Positions 123–170 (TDSHAYYNWTNYYTSLNSLDQIDWPILQARDFRRDPDDPAKFERYQAE) are ADP-ribosylating turn-turn loop. Glutamate 170 is an active-site residue.

This sequence belongs to the DarT ADP-ribosyltransferase family. In terms of assembly, interacts with cognate antitoxin DarG (via C-terminus); this heterodimeric complex neutralizes the toxic effect of DarT by preventing ssDNA binding to DarT and consequently inactivating the toxin by direct protein-protein interactions.

The enzyme catalyses a thymidine in DNA + NAD(+) = an N-(ADP-alpha-D-ribosyl)-thymidine in DNA + nicotinamide + H(+). In terms of biological role, toxic component of the hybrid type II/IV toxin-antitoxin (TA) system DarTG, which plays a crucial role in controlling bacterial growth and bacteriophage infection. ADP-ribosylates ssDNA in the sequence TTT/TCT. In case of phage infection, DarT toxin ADP-ribosylates DNA, which inhibits both viral DNA and RNA synthesis and leads to abortive infection. Its toxic effect is neutralized by cognate antitoxin DarG. May target ssDNA loops during DNA replication, probably modifies thymidine. Wild-type protein cannot be expressed at low levels in the absence of its cognate antitoxin, but a mutant protein (G49D) can be expressed, which slows growth, rapidly inhibits DNA replication, and induces RecA expression and the SOS response. The slow growth phenotype can be suppressed by cognate antitoxin DarG. Has no activity on dsDNA in vitro. In vivo ADP-ribosylates genomic DNA (gDNA). Genetic data strongly suggests ADP-ribosylation by DarT probably generates ssDNA gaps that are repaired by the RecFOR-mediated homologous recombination pathway (RuvAB, RecG) and resolved by RuvC. In some cases these gaps probably migrate into dsDNA, where they are resolved by nucleotide excision repair (NER) detected by UvrAB, excised by UvrC, removed by UvrD, and repaired by Pol I and ligase. Other pathways may also be involved in ADP-ribosylation removal from DNA. This Escherichia coli O127:H6 (strain E2348/69 / EPEC) protein is DNA ADP-ribosyl transferase.